A 657-amino-acid chain; its full sequence is Pentatricopeptide repeat-containing protein CRR2, chloroplastic (657 aa).

The N-terminal 51 residues, 1–51, are a transit peptide targeting the chloroplast; it reads MFLSHPPQVIQPTYHTVNFLPRSPLKPPSCSVALNNPSISSGAGAKISNNQ. PPR repeat units lie at residues 45–75, 76–110, 111–141, 142–176, 177–215, 216–246, 247–277, 284–318, 319–349, 350–384, 385–420, and 421–451; these read AKIS…ESSP, SQQT…GSDQ, DPFL…TRKR, TIYV…GVES, DRFT…GYSS, HVYI…MPVR, NVVS…MMRE, NSVT…GLDS, ILPV…MHDR, DVVS…GASP, TPVT…GIKP, and QIEH…MRTE. Residues 456–531 are type E motif; sequence VWGSLLGSCR…LPGRCWMEVR (76 aa). The type E(+) motif stretch occupies residues 532 to 562; sequence RKMYSFVSVDEFNPLMEQIHAFLVKLAEDMK. Positions 563–657 are type DYW motif; sequence EKGYIPQTKG…NGVCSCGDYW (95 aa).

The protein belongs to the PPR family. PCMP-H subfamily.

It is found in the plastid. Its subcellular location is the chloroplast. Its function is as follows. Required for the intergenic processing between chloroplast rsp7 and ndhB transcripts. Necessary for chloroplast NADH dehydrogenase-like (NDH) complex-dependent cyclic electron transport around PSI (CET). The chain is Pentatricopeptide repeat-containing protein CRR2, chloroplastic from Arabidopsis thaliana (Mouse-ear cress).